A 336-amino-acid chain; its full sequence is TBC1 domain family member 21 (336 aa).

The Rab-GAP TBC domain maps to 57-265; sequence GLHPFVRTEA…RLWEVLLTGK (209 aa).

Interacts with ACTB. Interacts with ARMC12, TOMM20, DNAH7 and RAP1A. Interacts with RAB10. As to expression, expressed in round and elongated spermatids (at protein level). Expressed specifically in adult testis and very weakly in fetal brain.

The protein localises to the cytoplasmic vesicle. It is found in the secretory vesicle. It localises to the acrosome. The protein resides in the cytoplasm. Its subcellular location is the cytoskeleton. Its function is as follows. Acts as a GTPase-activating protein for Rab family protein(s). Essential for the establishment of male fertility, and is required for both the production of normal sperm number and sperm function. Plays an important role in the formation of intact mitochondria, outer dense fibers and axoneme within the sperm tail. Essential for sperm mitochondrial sheath formation and for the interactions of ARMC12 with VDAC2 and VDAC3. May be involved in acrosome formation and cytoskeletal reorganization during spermiogenesis, possibly by regulating RAB3A activity. The protein is TBC1 domain family member 21 (TBC1D21) of Homo sapiens (Human).